The primary structure comprises 285 residues: Golgi phosphoprotein 3-like (285 aa).

Positions methionine 1–lysine 42 are disordered. Residues arginine 10–lysine 42 show a composition bias toward basic and acidic residues. Residues tryptophan 67 and arginine 76 each contribute to the a 1,2-diacyl-sn-glycero-3-phospho-(1D-myo-inositol 4-phosphate) site. Serine 112 bears the Phosphoserine mark. The a 1,2-diacyl-sn-glycero-3-phospho-(1D-myo-inositol 4-phosphate) site is built by arginine 157 and arginine 160. The beta-hairpin required for oligomerization stretch occupies residues glutamate 176 to threonine 187.

It belongs to the GOLPH3/VPS74 family. In terms of assembly, homooligomer. Does not interact MYO18; differs from GOLPH3 by its inability to interact with MYO18. May interact with ARF1.

The protein resides in the golgi apparatus. Its subcellular location is the golgi stack membrane. It is found in the trans-Golgi network membrane. Its function is as follows. Phosphatidylinositol-4-phosphate-binding protein that may antagonize the action of GOLPH3 which is required for the process of vesicle budding at the Golgi and anterograde transport to the plasma membrane. This chain is Golgi phosphoprotein 3-like (GOLPH3L), found in Homo sapiens (Human).